A 247-amino-acid polypeptide reads, in one-letter code: Large ribosomal subunit protein uL24m (247 aa).

A KOW domain is found at 84 to 117 (FFRGDRIEVLVGKDKGKQGIVTQVIPERNWVIVE).

The protein belongs to the universal ribosomal protein uL24 family. As to quaternary structure, component of the mitochondrial ribosome large subunit (39S) which comprises a 16S rRNA and about 50 distinct proteins.

The protein localises to the mitochondrion. The chain is Large ribosomal subunit protein uL24m (mRpL24) from Drosophila melanogaster (Fruit fly).